We begin with the raw amino-acid sequence, 191 residues long: Ribosome maturation factor RimM (191 aa).

In terms of domain architecture, PRC barrel spans 102–185 (EEEYHVSQLI…RIEINPPKGL (84 aa)).

The protein belongs to the RimM family. As to quaternary structure, binds ribosomal protein uS19.

Its subcellular location is the cytoplasm. In terms of biological role, an accessory protein needed during the final step in the assembly of 30S ribosomal subunit, possibly for assembly of the head region. Essential for efficient processing of 16S rRNA. May be needed both before and after RbfA during the maturation of 16S rRNA. It has affinity for free ribosomal 30S subunits but not for 70S ribosomes. In Crocosphaera subtropica (strain ATCC 51142 / BH68) (Cyanothece sp. (strain ATCC 51142)), this protein is Ribosome maturation factor RimM.